We begin with the raw amino-acid sequence, 253 residues long: Precorrin-4 C(11)-methyltransferase (253 aa).

It belongs to the precorrin methyltransferase family.

The enzyme catalyses precorrin-4 + S-adenosyl-L-methionine = precorrin-5 + S-adenosyl-L-homocysteine. It functions in the pathway cofactor biosynthesis; adenosylcobalamin biosynthesis; cob(II)yrinate a,c-diamide from precorrin-2 (aerobic route): step 4/10. Functionally, catalyzes the methylation of C-11 in precorrin-4 to form precorrin-5. The chain is Precorrin-4 C(11)-methyltransferase (cobM) from Sinorhizobium sp.